We begin with the raw amino-acid sequence, 209 residues long: Putative 3-methyladenine DNA glycosylase (209 aa).

The protein belongs to the DNA glycosylase MPG family.

In Lactiplantibacillus plantarum (strain ATCC BAA-793 / NCIMB 8826 / WCFS1) (Lactobacillus plantarum), this protein is Putative 3-methyladenine DNA glycosylase.